We begin with the raw amino-acid sequence, 342 residues long: Succinoglycan biosynthesis protein ExoU (342 aa).

The protein belongs to the glycosyltransferase 2 family.

It localises to the cytoplasm. Its pathway is glycan metabolism; exopolysaccharide biosynthesis. Functionally, glycosyltransferase required for the synthesis of succinoglycan (EPS I). Needed for the addition of the sixth sugar (glucose), catalyzes the formation of a beta-1,6 linkage between the fifth and sixth sugar. The protein is Succinoglycan biosynthesis protein ExoU (exoU) of Rhizobium meliloti (strain 1021) (Ensifer meliloti).